Consider the following 434-residue polypeptide: Methylenetetrahydrofolate--tRNA-(uracil-5-)-methyltransferase TrmFO (434 aa).

9–14 (GGGLAG) lines the FAD pocket.

It belongs to the MnmG family. TrmFO subfamily. It depends on FAD as a cofactor.

It localises to the cytoplasm. It carries out the reaction uridine(54) in tRNA + (6R)-5,10-methylene-5,6,7,8-tetrahydrofolate + NADH + H(+) = 5-methyluridine(54) in tRNA + (6S)-5,6,7,8-tetrahydrofolate + NAD(+). The catalysed reaction is uridine(54) in tRNA + (6R)-5,10-methylene-5,6,7,8-tetrahydrofolate + NADPH + H(+) = 5-methyluridine(54) in tRNA + (6S)-5,6,7,8-tetrahydrofolate + NADP(+). Functionally, catalyzes the folate-dependent formation of 5-methyl-uridine at position 54 (M-5-U54) in all tRNAs. The polypeptide is Methylenetetrahydrofolate--tRNA-(uracil-5-)-methyltransferase TrmFO (Geobacter sulfurreducens (strain ATCC 51573 / DSM 12127 / PCA)).